The following is a 78-amino-acid chain: UPF0349 protein RBAM_029300 (78 aa).

This sequence belongs to the UPF0349 family.

The chain is UPF0349 protein RBAM_029300 from Bacillus velezensis (strain DSM 23117 / BGSC 10A6 / LMG 26770 / FZB42) (Bacillus amyloliquefaciens subsp. plantarum).